The sequence spans 229 residues: Potassium/proton antiporter CemA (229 aa).

3 consecutive transmembrane segments (helical) span residues 7–27, 106–126, and 189–209; these read LTPL…SLSF, IILH…FFIM, and IISG…KYWI.

The protein belongs to the CemA family.

It is found in the plastid. It localises to the chloroplast inner membrane. The catalysed reaction is K(+)(in) + H(+)(out) = K(+)(out) + H(+)(in). Contributes to K(+)/H(+) antiport activity by supporting proton efflux to control proton extrusion and homeostasis in chloroplasts in a light-dependent manner to modulate photosynthesis. Prevents excessive induction of non-photochemical quenching (NPQ) under continuous-light conditions. Indirectly promotes efficient inorganic carbon uptake into chloroplasts. The chain is Potassium/proton antiporter CemA from Ceratophyllum demersum (Rigid hornwort).